The following is a 249-amino-acid chain: Type III pantothenate kinase (249 aa).

Position 6–13 (6–13) interacts with ATP; sequence DAGNSRIK. Substrate is bound by residues Phe-77 and 98 to 101; that span reads GVDR. Asp-100 (proton acceptor) is an active-site residue. Residue Asp-121 coordinates K(+). Ser-124 is a binding site for ATP. Thr-177 contributes to the substrate binding site.

It belongs to the type III pantothenate kinase family. As to quaternary structure, homodimer. Requires NH4(+) as cofactor. The cofactor is K(+).

The protein localises to the cytoplasm. It catalyses the reaction (R)-pantothenate + ATP = (R)-4'-phosphopantothenate + ADP + H(+). It functions in the pathway cofactor biosynthesis; coenzyme A biosynthesis; CoA from (R)-pantothenate: step 1/5. In terms of biological role, catalyzes the phosphorylation of pantothenate (Pan), the first step in CoA biosynthesis. This is Type III pantothenate kinase from Teredinibacter turnerae (strain ATCC 39867 / T7901).